The primary structure comprises 520 residues: Zinc finger and BTB domain-containing protein 18 (520 aa).

The region spanning 24-91 (CDCTVLVGDA…MYEGILQFKG (68 aa)) is the BTB domain. Residues 121 to 140 (ATTDSTKKEEDTSSFSDKVE) form a disordered region. 4 C2H2-type zinc fingers span residues 368 to 390 (FMCP…LSTH), 408 to 430 (PTCS…ERTH), 436 to 458 (YTCT…AVVH), and 464 to 487 (HACK…RKFH).

The protein belongs to the krueppel C2H2-type zinc-finger protein family. ZBTB18 subfamily.

It is found in the nucleus. Functionally, transcriptional repressor that plays a role in various developmental processes. Specifically binds the consensus DNA sequence 5'-[AC]ACATCTG[GT][AC]-3' which contains the E box core, and acts by recruiting chromatin remodeling multiprotein complexes. The chain is Zinc finger and BTB domain-containing protein 18 (zbtb18) from Xenopus laevis (African clawed frog).